The following is a 552-amino-acid chain: HTH-type transcriptional regulator SgrR (552 aa).

One can recognise an HTH marR-type domain in the interval 1 to 116; sequence MPSGRLQQQF…LISHLGRSFR (116 aa). Residues 26-49 constitute a DNA-binding region (H-T-H motif); the sequence is LNELADLLNCSRRHMRTLLNTMQA. The solute-binding stretch occupies residues 163-493; that stretch reads ELEADIAHHW…RDWQDDAAQW (331 aa).

Functionally, activates the small RNA gene sgrS under glucose-phosphate stress conditions as well as yfdZ. Represses its own transcription under both stress and non-stress conditions. Might act as a sensor of the intracellular accumulation of phosphoglucose by binding these molecules in its C-terminal solute-binding domain. In Salmonella choleraesuis (strain SC-B67), this protein is HTH-type transcriptional regulator SgrR.